The following is a 250-amino-acid chain: Serine/arginine-rich splicing factor RS31A (250 aa).

RRM domains lie at 2–74 (RHVY…WAKD) and 95–166 (KTLF…YALR). The segment at 170-250 (EREDRYAGSR…SRSPIQRARG (81 aa)) is disordered. Basic residues predominate over residues 177–191 (GSRRRRSPSPVYRRR). 5 positions are modified to phosphoserine: Ser183, Ser185, Ser201, Ser218, and Ser243. The segment covering 192–230 (PSPDYTRRRSPEYDRYKGPAPYERRKSPDYGRRSSDYGR) has biased composition (basic and acidic residues).

It belongs to the splicing factor SR family. RS subfamily. As to quaternary structure, component of the spliceosome. Interacts with MOS14.

The protein resides in the nucleus speckle. Its subcellular location is the nucleus. It localises to the nucleoplasm. Its function is as follows. Probably involved in intron recognition and spliceosome assembly. The chain is Serine/arginine-rich splicing factor RS31A (RS31A) from Arabidopsis thaliana (Mouse-ear cress).